The chain runs to 371 residues: tRNA-specific 2-thiouridylase MnmA (371 aa).

ATP contacts are provided by residues 24 to 31 and Leu50; that span reads AMSGGVDS. Cys120 (nucleophile) is an active-site residue. Cys120 and Cys216 form a disulfide bridge. Residue Gly144 coordinates ATP. Positions 166–168 are interaction with tRNA; it reads KDQ. Cys216 serves as the catalytic Cysteine persulfide intermediate.

The protein belongs to the MnmA/TRMU family.

It localises to the cytoplasm. The enzyme catalyses S-sulfanyl-L-cysteinyl-[protein] + uridine(34) in tRNA + AH2 + ATP = 2-thiouridine(34) in tRNA + L-cysteinyl-[protein] + A + AMP + diphosphate + H(+). In terms of biological role, catalyzes the 2-thiolation of uridine at the wobble position (U34) of tRNA, leading to the formation of s(2)U34. This chain is tRNA-specific 2-thiouridylase MnmA, found in Wolbachia sp. subsp. Brugia malayi (strain TRS).